Consider the following 334-residue polypeptide: Formamidase (334 aa).

Positions 14–260 constitute a CN hydrolase domain; that stretch reads FLVAAIQFPV…WEIVTGEIYP (247 aa). Glu60 acts as the Proton acceptor in catalysis. The active-site Proton donor is Lys133. The Nucleophile role is filled by Cys166.

This sequence belongs to the carbon-nitrogen hydrolase superfamily. Aliphatic amidase family.

The enzyme catalyses formamide + H2O = formate + NH4(+). Its function is as follows. Is an aliphatic amidase with a restricted substrate specificity, as it only hydrolyzes formamide. The polypeptide is Formamidase (Helicobacter pylori (strain Shi470)).